Consider the following 94-residue polypeptide: Potassium channel protein kcv (94 aa).

Residues 14 to 34 form a helical membrane-spanning segment; it reads FMIHLFILAMFVMIYKFFPGG. Asparagine 38 carries an N-linked (GlcNAc...) asparagine; by host glycan. A helical transmembrane segment spans residues 74–94; sequence TGAKLCTIAHIVTVFFIVLTL.

It belongs to the two pore domain potassium channel (TC 1.A.1.12) family.

It is found in the membrane. In terms of biological role, potassium-selective channel essential in the virus replication cycle. May be involved in preventing multiple infections (Potential). The sequence is that of Potassium channel protein kcv (A250R) from Paramecium bursaria Chlorella virus 1 (PBCV-1).